Reading from the N-terminus, the 194-residue chain is Holliday junction branch migration complex subunit RuvA (194 aa).

A domain I region spans residues 1–64 (MIARLSGILV…EDAQLLYGFG (64 aa)). The tract at residues 65 to 141 (SDQERATFRQ…FAIDGGTALA (77 aa)) is domain II. The flexible linker stretch occupies residues 141–144 (AGSN). The segment at 145 to 194 (PAKSASSDVLNALLALGYNEREALAAVKQLPADIAVAEGIKLSLKSLSKT) is domain III.

The protein belongs to the RuvA family. Homotetramer. Forms an RuvA(8)-RuvB(12)-Holliday junction (HJ) complex. HJ DNA is sandwiched between 2 RuvA tetramers; dsDNA enters through RuvA and exits via RuvB. An RuvB hexamer assembles on each DNA strand where it exits the tetramer. Each RuvB hexamer is contacted by two RuvA subunits (via domain III) on 2 adjacent RuvB subunits; this complex drives branch migration. In the full resolvosome a probable DNA-RuvA(4)-RuvB(12)-RuvC(2) complex forms which resolves the HJ.

The protein localises to the cytoplasm. Functionally, the RuvA-RuvB-RuvC complex processes Holliday junction (HJ) DNA during genetic recombination and DNA repair, while the RuvA-RuvB complex plays an important role in the rescue of blocked DNA replication forks via replication fork reversal (RFR). RuvA specifically binds to HJ cruciform DNA, conferring on it an open structure. The RuvB hexamer acts as an ATP-dependent pump, pulling dsDNA into and through the RuvAB complex. HJ branch migration allows RuvC to scan DNA until it finds its consensus sequence, where it cleaves and resolves the cruciform DNA. The sequence is that of Holliday junction branch migration complex subunit RuvA from Methylobacillus flagellatus (strain ATCC 51484 / DSM 6875 / VKM B-1610 / KT).